We begin with the raw amino-acid sequence, 188 residues long: Elongation factor P (188 aa).

Belongs to the elongation factor P family.

It is found in the cytoplasm. The protein operates within protein biosynthesis; polypeptide chain elongation. Its function is as follows. Involved in peptide bond synthesis. Stimulates efficient translation and peptide-bond synthesis on native or reconstituted 70S ribosomes in vitro. Probably functions indirectly by altering the affinity of the ribosome for aminoacyl-tRNA, thus increasing their reactivity as acceptors for peptidyl transferase. In Aeromonas hydrophila subsp. hydrophila (strain ATCC 7966 / DSM 30187 / BCRC 13018 / CCUG 14551 / JCM 1027 / KCTC 2358 / NCIMB 9240 / NCTC 8049), this protein is Elongation factor P.